Here is a 342-residue protein sequence, read N- to C-terminus: MLYLPDTMSAWPWQRAINPYFNEVKAASNSWFKSFRAFSPASQKAFDKCDFCLLAALAYPRARKEHLRTGCDLMNLFFVIDEYTDVEDANVCRDMVDIVIDALRRPHDPRPEGEVVLGEIARQFWARAIETASPTSQRRFLETFIAYLESVVLQAADRDCDAEHTVQTYLAQRRDNIGSYPSYAVLELALDIPDDIFYHPAMNELSLYATEMLIIDNDLVSYNREQASGDTNNILFVIMRQFNCSLDHAMAWAAAYHSQLEARFMDAFKRMPSWGLEIDSQVEEYCQGIANWPRGNDCWSFESGRYFGDKGREVQKTRCVPLLPKKERDTSLRQQDVVITSL.

Mg(2+) is bound at residue aspartate 81. Positions 93–97 (RDMVD) match the DDXXD motif motif. Residues asparagine 217, serine 221, and glutamate 225 each coordinate Mg(2+). The NSE/DTE motif signature appears at 217 to 225 (NDLVSYNRE). Residues arginine 305 and tyrosine 306 each contribute to the (2E,6E)-farnesyl diphosphate site.

This sequence belongs to the terpene synthase family. It depends on Mg(2+) as a cofactor.

It catalyses the reaction (2E,6E)-farnesyl diphosphate = Delta(6)-protoilludene + diphosphate. In terms of biological role, terpene cyclase that catalyzes the cyclization of farnesyl diphosphate (FPP) to delta(6)-protoilludene. The chain is Delta(6)-protoilludene synthase 8 from Postia placenta (strain ATCC 44394 / Madison 698-R) (Brown rot fungus).